The chain runs to 298 residues: Acetyl-coenzyme A carboxylase carboxyl transferase subunit beta (298 aa).

The CoA carboxyltransferase N-terminal domain occupies 25-295; sequence VWAKCANCGE…SADHREHVVA (271 aa). Zn(2+) is bound by residues C29, C32, C48, and C51. The C4-type zinc-finger motif lies at 29-51; that stretch reads CANCGELTYQKQFNDALKVCPKC.

The protein belongs to the AccD/PCCB family. In terms of assembly, acetyl-CoA carboxylase is a heterohexamer composed of biotin carboxyl carrier protein (AccB), biotin carboxylase (AccC) and two subunits each of ACCase subunit alpha (AccA) and ACCase subunit beta (AccD). It depends on Zn(2+) as a cofactor.

The protein resides in the cytoplasm. It catalyses the reaction N(6)-carboxybiotinyl-L-lysyl-[protein] + acetyl-CoA = N(6)-biotinyl-L-lysyl-[protein] + malonyl-CoA. Its pathway is lipid metabolism; malonyl-CoA biosynthesis; malonyl-CoA from acetyl-CoA: step 1/1. In terms of biological role, component of the acetyl coenzyme A carboxylase (ACC) complex. Biotin carboxylase (BC) catalyzes the carboxylation of biotin on its carrier protein (BCCP) and then the CO(2) group is transferred by the transcarboxylase to acetyl-CoA to form malonyl-CoA. The chain is Acetyl-coenzyme A carboxylase carboxyl transferase subunit beta from Herpetosiphon aurantiacus (strain ATCC 23779 / DSM 785 / 114-95).